Consider the following 196-residue polypeptide: uncharacterized protein (196 aa).

Positions 12-66 (LRAAREAQKMSQRELSARSGLTQSHISQIERGTMEPGLGSLVDVARALDLEIVLA) constitute an HTH cro/C1-type domain. Positions 23 to 42 (QRELSARSGLTQSHISQIER) form a DNA-binding region, H-T-H motif. The segment at 174 to 196 (VHRDRDDAVPRSAYALDEEDDNA) is disordered.

This is an uncharacterized protein from Sinorhizobium fredii (strain NBRC 101917 / NGR234).